The chain runs to 475 residues: Ribulose bisphosphate carboxylase large chain (475 aa).

The propeptide occupies 1–2 (MV). N-acetylproline is present on Pro-3. Lys-14 is modified (N6,N6,N6-trimethyllysine). Residues Asn-123 and Thr-173 each coordinate substrate. Lys-175 serves as the catalytic Proton acceptor. Residue Lys-177 participates in substrate binding. Lys-201, Asp-203, and Glu-204 together coordinate Mg(2+). At Lys-201 the chain carries N6-carboxylysine. The Proton acceptor role is filled by His-294. Substrate contacts are provided by Arg-295, His-327, and Ser-379.

This sequence belongs to the RuBisCO large chain family. Type I subfamily. In terms of assembly, heterohexadecamer of 8 large chains and 8 small chains. It depends on Mg(2+) as a cofactor.

It localises to the plastid. It is found in the chloroplast. The enzyme catalyses 2 (2R)-3-phosphoglycerate + 2 H(+) = D-ribulose 1,5-bisphosphate + CO2 + H2O. The catalysed reaction is D-ribulose 1,5-bisphosphate + O2 = 2-phosphoglycolate + (2R)-3-phosphoglycerate + 2 H(+). RuBisCO catalyzes two reactions: the carboxylation of D-ribulose 1,5-bisphosphate, the primary event in carbon dioxide fixation, as well as the oxidative fragmentation of the pentose substrate in the photorespiration process. Both reactions occur simultaneously and in competition at the same active site. The sequence is that of Ribulose bisphosphate carboxylase large chain from Dunaliella tertiolecta (Green alga).